The sequence spans 98 residues: uncharacterized protein (98 aa).

A compositionally biased stretch (basic residues) spans 1 to 10 (MARRRKPLHR). A disordered region spans residues 1–21 (MARRRKPLHRQRPEPPSWALR).

This is an uncharacterized protein from Mycobacterium bovis (strain ATCC BAA-935 / AF2122/97).